The chain runs to 309 residues: Methionyl-tRNA formyltransferase (309 aa).

110–113 (SLLP) contacts (6S)-5,6,7,8-tetrahydrofolate. The tract at residues 289–309 (KRMAATDWARGSRIEQGERLK) is disordered. The segment covering 298–309 (RGSRIEQGERLK) has biased composition (basic and acidic residues).

Belongs to the Fmt family.

The enzyme catalyses L-methionyl-tRNA(fMet) + (6R)-10-formyltetrahydrofolate = N-formyl-L-methionyl-tRNA(fMet) + (6S)-5,6,7,8-tetrahydrofolate + H(+). Functionally, attaches a formyl group to the free amino group of methionyl-tRNA(fMet). The formyl group appears to play a dual role in the initiator identity of N-formylmethionyl-tRNA by promoting its recognition by IF2 and preventing the misappropriation of this tRNA by the elongation apparatus. In Saccharopolyspora erythraea (strain ATCC 11635 / DSM 40517 / JCM 4748 / NBRC 13426 / NCIMB 8594 / NRRL 2338), this protein is Methionyl-tRNA formyltransferase.